The following is a 436-amino-acid chain: Histidine--tRNA ligase (436 aa).

It belongs to the class-II aminoacyl-tRNA synthetase family. As to quaternary structure, homodimer.

It localises to the cytoplasm. It carries out the reaction tRNA(His) + L-histidine + ATP = L-histidyl-tRNA(His) + AMP + diphosphate + H(+). The polypeptide is Histidine--tRNA ligase (Psychrobacter sp. (strain PRwf-1)).